Consider the following 532-residue polypeptide: MNVKKPVILAILDGWGIEEAGVGNAVANADQKFVKEMMGMYPWVKAHASGEWVGLPEGQMGNSEVGHIHLGAGRINMESLAKLNHEVKVDGFLTNEVLVDTFKYVKEHNSALHLMGLFSDGGVHSHMNHMISMYKAAVKFGLTNIKFDLITDGRDTAPKVAEQYINQLLQVIKDNNNIGEIASISGRYFAMDRDKRFERSAAAYITMTERKVDQPKFTDPIEYVKAAYENGLDDEMIVPAYNASVVDSELKANDAMIFTNFRPDRAIQMASIMTNNNYPAWNDEAFKDVEFIGDKIRFVSTMKYADSVTSQFIAYPPTPLTNTLGEYISSLGLKQLRIAETEKIAHVTFFFDGGNDYFKNGLAKPEEISLPHASIDLISSPKVATYDLKPEMSAVEITDKLLEEVKKDEFDLIVLNFANCDMVGHTGNNDATVKGVKVLDEQLKRIHDEFVLKHNGVMVITADHGNAEIMIDETGGPNKKHTTSLVPIIVTDKTIELSDFDPAIAKVAPTILDIMGLEIPKEMTQPSMIIKK.

Asp-13 and Ser-63 together coordinate Mn(2+). Catalysis depends on Ser-63, which acts as the Phosphoserine intermediate. Residues His-124, 154–155 (RD), Arg-187, Arg-193, 262–265 (RPDR), and Lys-343 contribute to the substrate site. Mn(2+) contacts are provided by Asp-421, His-425, Asp-463, His-464, and His-481.

Belongs to the BPG-independent phosphoglycerate mutase family. In terms of assembly, monomer. Mn(2+) is required as a cofactor.

The catalysed reaction is (2R)-2-phosphoglycerate = (2R)-3-phosphoglycerate. Its pathway is carbohydrate degradation; glycolysis; pyruvate from D-glyceraldehyde 3-phosphate: step 3/5. Its function is as follows. Catalyzes the interconversion of 2-phosphoglycerate and 3-phosphoglycerate. The chain is 2,3-bisphosphoglycerate-independent phosphoglycerate mutase from Mesoplasma florum (strain ATCC 33453 / NBRC 100688 / NCTC 11704 / L1) (Acholeplasma florum).